The primary structure comprises 355 residues: S-adenosylmethionine:tRNA ribosyltransferase-isomerase (355 aa).

The protein belongs to the QueA family. In terms of assembly, monomer.

It localises to the cytoplasm. It catalyses the reaction 7-aminomethyl-7-carbaguanosine(34) in tRNA + S-adenosyl-L-methionine = epoxyqueuosine(34) in tRNA + adenine + L-methionine + 2 H(+). It functions in the pathway tRNA modification; tRNA-queuosine biosynthesis. Functionally, transfers and isomerizes the ribose moiety from AdoMet to the 7-aminomethyl group of 7-deazaguanine (preQ1-tRNA) to give epoxyqueuosine (oQ-tRNA). This chain is S-adenosylmethionine:tRNA ribosyltransferase-isomerase, found in Pectobacterium atrosepticum (strain SCRI 1043 / ATCC BAA-672) (Erwinia carotovora subsp. atroseptica).